Reading from the N-terminus, the 400-residue chain is Elongation factor Tu 1 (400 aa).

Residues 10-209 (KPHLNIGTIG…AVDSYIPLPQ (200 aa)) enclose the tr-type G domain. Positions 19-26 (GHIDHGKT) are G1. GTP is bound at residue 19–26 (GHIDHGKT). Residue threonine 26 coordinates Mg(2+). The interval 60-64 (GITIN) is G2. Residues 81-84 (DCPG) are G3. Residues 81 to 85 (DCPGH) and 136 to 139 (NKTD) each bind GTP. Residues 136 to 139 (NKTD) are G4. The interval 174–176 (SAL) is G5.

Belongs to the TRAFAC class translation factor GTPase superfamily. Classic translation factor GTPase family. EF-Tu/EF-1A subfamily. In terms of assembly, monomer.

The protein localises to the cytoplasm. It catalyses the reaction GTP + H2O = GDP + phosphate + H(+). In terms of biological role, GTP hydrolase that promotes the GTP-dependent binding of aminoacyl-tRNA to the A-site of ribosomes during protein biosynthesis. This is Elongation factor Tu 1 from Syntrophomonas wolfei subsp. wolfei (strain DSM 2245B / Goettingen).